The chain runs to 125 residues: Holo-[acyl-carrier-protein] synthase (125 aa).

Residues aspartate 8 and glutamate 57 each coordinate Mg(2+).

Belongs to the P-Pant transferase superfamily. AcpS family. Mg(2+) serves as cofactor.

The protein resides in the cytoplasm. It catalyses the reaction apo-[ACP] + CoA = holo-[ACP] + adenosine 3',5'-bisphosphate + H(+). Functionally, transfers the 4'-phosphopantetheine moiety from coenzyme A to a Ser of acyl-carrier-protein. In Nitrosomonas europaea (strain ATCC 19718 / CIP 103999 / KCTC 2705 / NBRC 14298), this protein is Holo-[acyl-carrier-protein] synthase.